The following is a 267-amino-acid chain: Diacetylchitobiose deacetylase (267 aa).

It belongs to the PIGL family. As to quaternary structure, homohexamer.

Its subcellular location is the cytoplasm. It catalyses the reaction N,N'-diacetylchitobiose + H2O = beta-D-glucosaminyl-(1-&gt;4)-N-acetyl-D-glucosamine + acetate. It functions in the pathway glycan degradation; chitin degradation. Its function is as follows. Deacylates the non-reducing end of diacetylchitobiose (GlcNAc2). Can also use N-acetylglucosamine (GlcNAc) and N-acetylchitotriose (GlcNAc3). Probably involved in chitin degradation. The sequence is that of Diacetylchitobiose deacetylase (dac) from Thermococcus kodakarensis (strain ATCC BAA-918 / JCM 12380 / KOD1) (Pyrococcus kodakaraensis (strain KOD1)).